The primary structure comprises 476 residues: Glycogen synthase (476 aa).

K15 serves as a coordination point for ADP-alpha-D-glucose.

This sequence belongs to the glycosyltransferase 1 family. Bacterial/plant glycogen synthase subfamily.

It catalyses the reaction [(1-&gt;4)-alpha-D-glucosyl](n) + ADP-alpha-D-glucose = [(1-&gt;4)-alpha-D-glucosyl](n+1) + ADP + H(+). The protein operates within glycan biosynthesis; glycogen biosynthesis. Its function is as follows. Synthesizes alpha-1,4-glucan chains using ADP-glucose. The polypeptide is Glycogen synthase (Yersinia pseudotuberculosis serotype O:1b (strain IP 31758)).